Consider the following 237-residue polypeptide: Cysteine-rich venom protein ENH2 (237 aa).

Residues methionine 1 to alanine 18 form the signal peptide. The SCP domain maps to valine 37–tyrosine 165. Cystine bridges form between cysteine 74–cysteine 152, cysteine 91–cysteine 166, cysteine 147–cysteine 163, cysteine 185–cysteine 192, cysteine 188–cysteine 197, cysteine 210–cysteine 228, and cysteine 219–cysteine 232. A ShKT domain is found at cysteine 201 to lysine 237.

Belongs to the CRISP family. As to expression, expressed by the venom gland.

The protein localises to the secreted. Its function is as follows. Blocks contraction of smooth muscle elicited by high potassium-induced depolarization, but does not block caffeine-stimulated contraction. May target voltage-gated calcium channels on smooth muscle. The protein is Cysteine-rich venom protein ENH2 of Pseudoferania polylepis (Macleay's water snake).